We begin with the raw amino-acid sequence, 208 residues long: UPF0316 protein SERP1448 (208 aa).

Helical transmembrane passes span 8 to 28, 40 to 60, and 66 to 86; these read PWLM…FLTM, VAAV…GLVM, and IQNI…GMKI.

This sequence belongs to the UPF0316 family.

Its subcellular location is the cell membrane. This Staphylococcus epidermidis (strain ATCC 35984 / DSM 28319 / BCRC 17069 / CCUG 31568 / BM 3577 / RP62A) protein is UPF0316 protein SERP1448.